The primary structure comprises 664 residues: Sorbicillinoid biosynthetic cluster transcription factor sor3 (664 aa).

Residues 40–67 (CQSCRASKVKCDGGRPVCARCQKRGRAC) constitute a DNA-binding region (zn(2)-C6 fungal-type). A disordered region spans residues 68 to 102 (SYSQHDAASPRGRGRQRAKAPTRQPRPIRSRASVE).

The protein localises to the nucleus. In terms of biological role, transcription factor that acts in concert with sor4 which is a transcriptional activator of the gene cluster that mediates the biosynthesis of sorbicillinoids, a diverse group of yellow secondary metabolites that restrict growth of competing pathogenic fungi but not of bacteria. Regulates the cluster genes in a light dependent manner. Also plays a direct or indirect role in regulation of paracelsin biosynthesis and cellulase gene expression. This chain is Sorbicillinoid biosynthetic cluster transcription factor sor3, found in Hypocrea jecorina (strain QM6a) (Trichoderma reesei).